Reading from the N-terminus, the 503-residue chain is uncharacterized protein (503 aa).

It belongs to the Mg-chelatase subunits D/I family. ComM subfamily.

This is an uncharacterized protein from Mycobacterium tuberculosis (strain CDC 1551 / Oshkosh).